A 128-amino-acid polypeptide reads, in one-letter code: uncharacterized protein (128 aa).

Positions 24–43 (KRTQNNTEQASRAINSPLQS) are disordered. Positions 26–43 (TQNNTEQASRAINSPLQS) are enriched in polar residues.

This is an uncharacterized protein from Homo sapiens (Human).